Consider the following 402-residue polypeptide: Ferredoxin--NADP reductase (402 aa).

The CpcD-like domain occupies 18-74 (NRLFIYEVVGLGGDGRNENSLVRKSGTTFITVPYARMNQEMQRITKLGGKIVSIRPA). The segment at 80–101 (IVSEGQSSAQASAQSPMASSTK) is disordered. Positions 85-99 (QSSAQASAQSPMASS) are enriched in low complexity. In terms of domain architecture, FAD-binding FR-type spans 120–245 (KTPFLGKCIE…TGPVGKEMLL (126 aa)). Residues 179–182 (RLYS), 200–202 (CVR), Tyr-206, 218–220 (VCS), and Thr-260 contribute to the FAD site. The NADP(+) site is built by Ser-182 and Arg-202. NADP(+) is bound by residues Thr-260, 292–293 (VP), 322–323 (SR), Lys-332, 332–336 (KVYVQ), 361–362 (GL), and Glu-400.

The protein belongs to the ferredoxin--NADP reductase type 1 family. Requires FAD as cofactor.

The protein localises to the cellular thylakoid membrane. The enzyme catalyses 2 reduced [2Fe-2S]-[ferredoxin] + NADP(+) + H(+) = 2 oxidized [2Fe-2S]-[ferredoxin] + NADPH. In Picosynechococcus sp. (strain ATCC 27264 / PCC 7002 / PR-6) (Agmenellum quadruplicatum), this protein is Ferredoxin--NADP reductase (petH).